Reading from the N-terminus, the 322-residue chain is Formimidoylglutamase (322 aa).

6 residues coordinate Mn(2+): His130, Asp156, His158, Asp160, Cys245, and Asp247.

It belongs to the arginase family. Requires Mn(2+) as cofactor.

It catalyses the reaction N-formimidoyl-L-glutamate + H2O = formamide + L-glutamate. It functions in the pathway amino-acid degradation; L-histidine degradation into L-glutamate; L-glutamate from N-formimidoyl-L-glutamate (hydrolase route): step 1/1. Functionally, catalyzes the conversion of N-formimidoyl-L-glutamate to L-glutamate and formamide. The protein is Formimidoylglutamase of Lysinibacillus sphaericus (strain C3-41).